A 138-amino-acid chain; its full sequence is uncharacterized protein (138 aa).

Helical transmembrane passes span 17 to 37, 43 to 63, and 117 to 137; these read IVVS…TIYF, FTVV…LLVC, and FWWM…LVSL.

The protein resides in the cell membrane. This is an uncharacterized protein from Mycoplasma genitalium (strain ATCC 33530 / DSM 19775 / NCTC 10195 / G37) (Mycoplasmoides genitalium).